The chain runs to 495 residues: Probable aminotransferase ACS12 (495 aa).

Position 334 is an N6-(pyridoxal phosphate)lysine (K334).

It belongs to the class-I pyridoxal-phosphate-dependent aminotransferase family. In terms of assembly, homodimer. Pyridoxal 5'-phosphate is required as a cofactor. As to expression, expressed in roots. Expressed at low level in leaves, stems, flowers and siliques.

In terms of biological role, probable aminotransferase. Does not have 1-aminocyclopropane-1-carboxylate synthase (ACS) activity, suggesting that it is not involved in ethylene biosynthesis. This chain is Probable aminotransferase ACS12 (ACS12), found in Arabidopsis thaliana (Mouse-ear cress).